We begin with the raw amino-acid sequence, 143 residues long: ATP synthase subunit b' (143 aa).

A helical membrane pass occupies residues 6–26 (ATLPLMALQFVLLAIILNAIF).

It belongs to the ATPase B chain family. In terms of assembly, F-type ATPases have 2 components, F(1) - the catalytic core - and F(0) - the membrane proton channel. F(1) has five subunits: alpha(3), beta(3), gamma(1), delta(1), epsilon(1). F(0) has four main subunits: a(1), b(1), b'(1) and c(10-14). The alpha and beta chains form an alternating ring which encloses part of the gamma chain. F(1) is attached to F(0) by a central stalk formed by the gamma and epsilon chains, while a peripheral stalk is formed by the delta, b and b' chains.

It is found in the cellular thylakoid membrane. Functionally, f(1)F(0) ATP synthase produces ATP from ADP in the presence of a proton or sodium gradient. F-type ATPases consist of two structural domains, F(1) containing the extramembraneous catalytic core and F(0) containing the membrane proton channel, linked together by a central stalk and a peripheral stalk. During catalysis, ATP synthesis in the catalytic domain of F(1) is coupled via a rotary mechanism of the central stalk subunits to proton translocation. In terms of biological role, component of the F(0) channel, it forms part of the peripheral stalk, linking F(1) to F(0). The b'-subunit is a diverged and duplicated form of b found in plants and photosynthetic bacteria. In Crocosphaera subtropica (strain ATCC 51142 / BH68) (Cyanothece sp. (strain ATCC 51142)), this protein is ATP synthase subunit b'.